Here is a 500-residue protein sequence, read N- to C-terminus: Probable cytosol aminopeptidase (500 aa).

Lysine 264 and aspartate 269 together coordinate Mn(2+). The active site involves lysine 276. 3 residues coordinate Mn(2+): aspartate 287, aspartate 346, and glutamate 348. The active site involves arginine 350.

The protein belongs to the peptidase M17 family. Mn(2+) serves as cofactor.

It is found in the cytoplasm. The catalysed reaction is Release of an N-terminal amino acid, Xaa-|-Yaa-, in which Xaa is preferably Leu, but may be other amino acids including Pro although not Arg or Lys, and Yaa may be Pro. Amino acid amides and methyl esters are also readily hydrolyzed, but rates on arylamides are exceedingly low.. The enzyme catalyses Release of an N-terminal amino acid, preferentially leucine, but not glutamic or aspartic acids.. Functionally, presumably involved in the processing and regular turnover of intracellular proteins. Catalyzes the removal of unsubstituted N-terminal amino acids from various peptides. The polypeptide is Probable cytosol aminopeptidase (Nitrobacter winogradskyi (strain ATCC 25391 / DSM 10237 / CIP 104748 / NCIMB 11846 / Nb-255)).